Reading from the N-terminus, the 161-residue chain is 6,7-dimethyl-8-ribityllumazine synthase (161 aa).

Residues W31, 63 to 65 (SFE), and 85 to 87 (VVI) contribute to the 5-amino-6-(D-ribitylamino)uracil site. 90 to 91 (GT) contacts (2S)-2-hydroxy-3-oxobutyl phosphate. H93 functions as the Proton donor in the catalytic mechanism. F118 is a binding site for 5-amino-6-(D-ribitylamino)uracil. R132 lines the (2S)-2-hydroxy-3-oxobutyl phosphate pocket.

The protein belongs to the DMRL synthase family.

It carries out the reaction (2S)-2-hydroxy-3-oxobutyl phosphate + 5-amino-6-(D-ribitylamino)uracil = 6,7-dimethyl-8-(1-D-ribityl)lumazine + phosphate + 2 H2O + H(+). The protein operates within cofactor biosynthesis; riboflavin biosynthesis; riboflavin from 2-hydroxy-3-oxobutyl phosphate and 5-amino-6-(D-ribitylamino)uracil: step 1/2. Catalyzes the formation of 6,7-dimethyl-8-ribityllumazine by condensation of 5-amino-6-(D-ribitylamino)uracil with 3,4-dihydroxy-2-butanone 4-phosphate. This is the penultimate step in the biosynthesis of riboflavin. The protein is 6,7-dimethyl-8-ribityllumazine synthase of Paenarthrobacter aurescens (strain TC1).